A 513-amino-acid chain; its full sequence is Nitrate transporter 2.2 (513 aa).

12 helical membrane-spanning segments follow: residues 38-58 (WICF…APVI), 74-94 (VSAV…VDVV), 98-118 (YGAA…ALVT), 128-148 (FFIG…GTMF), 158-178 (AIAA…MPLI), 196-216 (AFFV…LLGI), 247-265 (LGNY…SFGV), 281-301 (FGLN…MNIF), 323-343 (LWVL…MGKV), 351-371 (IVIM…HFGI), 383-403 (VSGL…AIWF), and 419-439 (FVWM…IWFP).

This sequence belongs to the major facilitator superfamily. Nitrate/nitrite porter (TC 2.A.1.8) family.

It localises to the cell membrane. Involved in nitrate transport, but does not seem to be able to mediate transport by its own. Acts as a dual component transporter with NAR2 (system 2). Involved in a high affinity transport specific for nitrate. In Chlamydomonas reinhardtii (Chlamydomonas smithii), this protein is Nitrate transporter 2.2.